A 392-amino-acid polypeptide reads, in one-letter code: Formate-dependent phosphoribosylglycinamide formyltransferase (392 aa).

N(1)-(5-phospho-beta-D-ribosyl)glycinamide is bound by residues 22-23 and glutamate 82; that span reads EL. ATP contacts are provided by residues arginine 114, lysine 155, 160-165, 195-198, and glutamate 203; these read SSGKGQ and EGVV. Residues 119–308 form the ATP-grasp domain; it reads RLAAEELGLP…EFALHVRAFL (190 aa). The Mg(2+) site is built by glutamate 267 and glutamate 279. Residues aspartate 286, lysine 355, and 362 to 363 contribute to the N(1)-(5-phospho-beta-D-ribosyl)glycinamide site; that span reads RR.

The protein belongs to the PurK/PurT family. As to quaternary structure, homodimer.

The catalysed reaction is N(1)-(5-phospho-beta-D-ribosyl)glycinamide + formate + ATP = N(2)-formyl-N(1)-(5-phospho-beta-D-ribosyl)glycinamide + ADP + phosphate + H(+). It participates in purine metabolism; IMP biosynthesis via de novo pathway; N(2)-formyl-N(1)-(5-phospho-D-ribosyl)glycinamide from N(1)-(5-phospho-D-ribosyl)glycinamide (formate route): step 1/1. Functionally, involved in the de novo purine biosynthesis. Catalyzes the transfer of formate to 5-phospho-ribosyl-glycinamide (GAR), producing 5-phospho-ribosyl-N-formylglycinamide (FGAR). Formate is provided by PurU via hydrolysis of 10-formyl-tetrahydrofolate. This chain is Formate-dependent phosphoribosylglycinamide formyltransferase, found in Salmonella choleraesuis (strain SC-B67).